Consider the following 522-residue polypeptide: Man(5)GlcNAc(2)-PP-dolichol translocation protein RFT1 (522 aa).

A run of 10 helical transmembrane segments spans residues 35 to 55, 75 to 95, 108 to 128, 143 to 165, 177 to 197, 322 to 342, 354 to 374, 400 to 420, 457 to 477, and 479 to 499; these read DVLG…LFLT, LLWL…YLWY, VLLS…FSVI, FAIG…LFMF, AQYI…YIYI, VVGV…PVVI, GGAL…INGI, IIHL…GFIV, TSIF…LFAT, and PGLS…ILTA.

It belongs to the RFT1 family.

The protein resides in the endoplasmic reticulum membrane. The protein operates within protein modification; protein glycosylation. Its function is as follows. Intramembrane glycolipid transporter that operates in the biosynthetic pathway of dolichol-linked oligosaccharides, the glycan precursors employed in protein asparagine (N)-glycosylation. The sequential addition of sugars to dolichol pyrophosphate produces dolichol-linked oligosaccharides containing fourteen sugars, including two GlcNAcs, nine mannoses and three glucoses. Once assembled, the oligosaccharide is transferred from the lipid to nascent proteins by oligosaccharyltransferases. The assembly of dolichol-linked oligosaccharides begins on the cytosolic side of the endoplasmic reticulum membrane and finishes in its lumen. RFT1 could mediate the translocation of the cytosolically oriented intermediate DolPP-GlcNAc2Man5, produced by ALG11, into the ER lumen where dolichol-linked oligosaccharides assembly continues. However, the intramembrane lipid transporter activity could not be confirmed in vitro. The sequence is that of Man(5)GlcNAc(2)-PP-dolichol translocation protein RFT1 from Caenorhabditis elegans.